The sequence spans 319 residues: Probable cystathionine gamma-synthase (319 aa).

Residue Lys197 is modified to N6-(pyridoxal phosphate)lysine.

It belongs to the trans-sulfuration enzymes family. As to quaternary structure, homotetramer. The cofactor is pyridoxal 5'-phosphate.

The protein resides in the cytoplasm. It catalyses the reaction O-succinyl-L-homoserine + L-cysteine = L,L-cystathionine + succinate + H(+). Catalyzes the formation of L-cystathionine from O-succinyl-L-homoserine (OSHS) and L-cysteine, via a gamma-replacement reaction. In the absence of thiol, catalyzes gamma-elimination to form 2-oxobutanoate, succinate and ammonia. In Herpetosiphon aurantiacus (Herpetosiphon giganteus), this protein is Probable cystathionine gamma-synthase (metB).